Here is a 777-residue protein sequence, read N- to C-terminus: Acyl-CoA dehydrogenase family member 11 (777 aa).

Residues 501–511 (FCMTEPDVASS), 509–511 (ASS), 535–537 (WSS), and serine 537 each bind FAD. A substrate-binding site is contributed by serine 511. 626 to 629 (GPGR) contacts substrate. FAD-binding positions include arginine 654, glutamine 724, and 724–728 (QVCGG). Glycine 752 is a binding site for substrate. FAD-binding positions include 753–755 (PDE) and glutamate 755.

It belongs to the acyl-CoA dehydrogenase family. Homodimer. Requires FAD as cofactor.

Its subcellular location is the peroxisome. The protein localises to the mitochondrion membrane. It catalyses the reaction a 2,3-saturated acyl-CoA + oxidized [electron-transfer flavoprotein] + H(+) = a (2E)-enoyl-CoA + reduced [electron-transfer flavoprotein]. The enzyme catalyses docosanoyl-CoA + oxidized [electron-transfer flavoprotein] + H(+) = (2E)-docosenoyl-CoA + reduced [electron-transfer flavoprotein]. It carries out the reaction tetracosanoyl-CoA + oxidized [electron-transfer flavoprotein] + H(+) = (2E)-tetracosenoyl-CoA + reduced [electron-transfer flavoprotein]. The catalysed reaction is eicosanoyl-CoA + oxidized [electron-transfer flavoprotein] + H(+) = (2E)-eicosenoyl-CoA + reduced [electron-transfer flavoprotein]. It catalyses the reaction hexacosanoyl-CoA + oxidized [electron-transfer flavoprotein] + H(+) = (2E)-hexacosenoyl-CoA + reduced [electron-transfer flavoprotein]. The enzyme catalyses tricosanoyl-CoA + oxidized [electron-transfer flavoprotein] + H(+) = (2E)-tricosenoyl-CoA + reduced [electron-transfer flavoprotein]. Its pathway is lipid metabolism; fatty acid beta-oxidation. Functionally, acyl-CoA dehydrogenase, that exhibits maximal activity towards saturated C22-CoA. Probably participates in beta-oxydation and energy production but could also play a role in the metabolism of specific fatty acids to control fatty acids composition of cellular lipids in brain. The sequence is that of Acyl-CoA dehydrogenase family member 11 (ACAD11) from Gallus gallus (Chicken).